A 334-amino-acid polypeptide reads, in one-letter code: Cathepsin R (334 aa).

Positions 1-17 are cleaved as a signal peptide; the sequence is MAAVVFIAFLYLGVASG. The propeptide at 18–114 is activation peptide; it reads VPVLDSSLDA…SIMKREAGSI (97 aa). 2 cysteine pairs are disulfide-bonded: cysteine 136–cysteine 179 and cysteine 170–cysteine 212. The active site involves cysteine 139. The N-linked (GlcNAc...) asparagine glycan is linked to asparagine 269. A disulfide bridge links cysteine 270 with cysteine 323. Catalysis depends on residues histidine 277 and asparagine 301.

The protein belongs to the peptidase C1 family. As to expression, placenta.

The protein localises to the lysosome. This chain is Cathepsin R (Ctsr), found in Mus musculus (Mouse).